A 189-amino-acid chain; its full sequence is Protein GrpE (189 aa).

Positions 1 to 24 (MADEQNLDTQNPEAQAAENAAPSD) are disordered. Over residues 10–24 (QNPEAQAAENAAPSD) the composition is skewed to low complexity.

The protein belongs to the GrpE family. Homodimer.

It is found in the cytoplasm. In terms of biological role, participates actively in the response to hyperosmotic and heat shock by preventing the aggregation of stress-denatured proteins, in association with DnaK and GrpE. It is the nucleotide exchange factor for DnaK and may function as a thermosensor. Unfolded proteins bind initially to DnaJ; upon interaction with the DnaJ-bound protein, DnaK hydrolyzes its bound ATP, resulting in the formation of a stable complex. GrpE releases ADP from DnaK; ATP binding to DnaK triggers the release of the substrate protein, thus completing the reaction cycle. Several rounds of ATP-dependent interactions between DnaJ, DnaK and GrpE are required for fully efficient folding. This is Protein GrpE from Ectopseudomonas mendocina (strain ymp) (Pseudomonas mendocina).